Here is a 219-residue protein sequence, read N- to C-terminus: Ras-related protein Rab-3B (219 aa).

Ala2 is subject to N-acetylalanine. GTP-binding residues include Ser31, Ser32, Val33, Gly34, Lys35, Thr36, Ser37, Pro49, and Ser53. Thr36 provides a ligand contact to Mg(2+). Residues 45–58 carry the Switch 1 motif; the sequence is DTFTPAFVSTVGID. Thr54 and Asp77 together coordinate Mg(2+). Residues 78-96 carry the Switch 2 motif; sequence TAGQERYRTITTAYYRGAM. Gly80 contributes to the GTP binding site. At Thr86 the chain carries Phosphothreonine. GTP is bound by residues Asn135, Lys136, Asp138, Ala166, and Lys167. Residue Ser188 is modified to Phosphoserine. Residues Cys217 and Cys219 are each lipidated (S-geranylgeranyl cysteine). Cys219 carries the cysteine methyl ester modification.

Belongs to the small GTPase superfamily. Rab family. In terms of assembly, interacts with RIMS1, RIMS2, RPH3A and RPH3AL. The GTP-bound form interacts with GAS8/DRC4 (via coiled-coil domains). Interacts with GDI2, CHM and CHML; phosphorylation at Thr-86 disrupts these interactions. Interacts with MADD (via uDENN domain); the GTP-bound form is preferred for interaction. Mg(2+) serves as cofactor. In terms of processing, phosphorylation of Thr-86 in the switch II region by LRRK2 prevents the association of RAB regulatory proteins, including CHM, CHML and RAB GDP dissociation inhibitor GDI2.

It localises to the cell membrane. It is found in the golgi apparatus. The catalysed reaction is GTP + H2O = GDP + phosphate + H(+). Its activity is regulated as follows. Regulated by guanine nucleotide exchange factors (GEFs) which promote the exchange of bound GDP for free GTP. Regulated by GTPase activating proteins (GAPs) which increase the GTP hydrolysis activity. Inhibited by GDP dissociation inhibitors (GDIs) which prevent Rab-GDP dissociation. The small GTPases Rab are key regulators of intracellular membrane trafficking, from the formation of transport vesicles to their fusion with membranes. Rabs cycle between an inactive GDP-bound form and an active GTP-bound form that is able to recruit to membranes different sets of downstream effectors directly responsible for vesicle formation, movement, tethering and fusion. In Bos taurus (Bovine), this protein is Ras-related protein Rab-3B (RAB3B).